The following is a 456-amino-acid chain: tRNA-2-methylthio-N(6)-dimethylallyladenosine synthase (456 aa).

In terms of domain architecture, MTTase N-terminal spans 2–119 (KKVFIKTYGC…LPDLIAARRR (118 aa)). The [4Fe-4S] cluster site is built by cysteine 11, cysteine 48, cysteine 82, cysteine 156, cysteine 160, and cysteine 163. The 234-residue stretch at 142-375 (RVDGASAYVS…QATIEENVAR (234 aa)) folds into the Radical SAM core domain. Residues 378-448 (QGMVGSVQRI…PHSLRGEVAE (71 aa)) form the TRAM domain.

This sequence belongs to the methylthiotransferase family. MiaB subfamily. As to quaternary structure, monomer. It depends on [4Fe-4S] cluster as a cofactor.

The protein resides in the cytoplasm. It carries out the reaction N(6)-dimethylallyladenosine(37) in tRNA + (sulfur carrier)-SH + AH2 + 2 S-adenosyl-L-methionine = 2-methylsulfanyl-N(6)-dimethylallyladenosine(37) in tRNA + (sulfur carrier)-H + 5'-deoxyadenosine + L-methionine + A + S-adenosyl-L-homocysteine + 2 H(+). Catalyzes the methylthiolation of N6-(dimethylallyl)adenosine (i(6)A), leading to the formation of 2-methylthio-N6-(dimethylallyl)adenosine (ms(2)i(6)A) at position 37 in tRNAs that read codons beginning with uridine. In Ralstonia pickettii (strain 12J), this protein is tRNA-2-methylthio-N(6)-dimethylallyladenosine synthase.